The sequence spans 154 residues: Lipoprotein signal peptidase (154 aa).

2 helical membrane passes run 55 to 75 (GHMWFFYLITVVVIGIIIYIM) and 84 to 104 (LFSISLAFILGGAIGNFIDRV). Residues aspartate 111 and aspartate 129 contribute to the active site. The helical transmembrane segment at 124-144 (IFNVADASLSVGVVLMLVYVF) threads the bilayer.

It belongs to the peptidase A8 family.

It localises to the cell membrane. The catalysed reaction is Release of signal peptides from bacterial membrane prolipoproteins. Hydrolyzes -Xaa-Yaa-Zaa-|-(S,diacylglyceryl)Cys-, in which Xaa is hydrophobic (preferably Leu), and Yaa (Ala or Ser) and Zaa (Gly or Ala) have small, neutral side chains.. Its pathway is protein modification; lipoprotein biosynthesis (signal peptide cleavage). This protein specifically catalyzes the removal of signal peptides from prolipoproteins. The polypeptide is Lipoprotein signal peptidase (Listeria monocytogenes serovar 1/2a (strain ATCC BAA-679 / EGD-e)).